The chain runs to 226 residues: Chalcone--flavanone isomerase 3 (226 aa).

Substrate contacts are provided by T49, N114, and S191.

This sequence belongs to the chalcone isomerase family.

It catalyses the reaction a chalcone = a flavanone.. It participates in secondary metabolite biosynthesis; flavonoid biosynthesis. Catalyzes the intramolecular cyclization of bicyclic chalcones into tricyclic (S)-flavanones. Responsible for the isomerization of 4,2',4',6'-tetrahydroxychalcone (also termed chalcone) into naringenin. This chain is Chalcone--flavanone isomerase 3 (CHI3), found in Glycine max (Soybean).